Consider the following 268-residue polypeptide: Casein kinase II subunit beta (268 aa).

Residues 222–268 form a disordered region; that stretch reads LSNNNQNNQNNNINNNNNNNNNNNNNNNNNNNNQQNNNNQQNNNTNK. Low complexity predominate over residues 224–268; it reads NNNQNNQNNNINNNNNNNNNNNNNNNNNNNNQQNNNNQQNNNTNK.

This sequence belongs to the casein kinase 2 subunit beta family. Casein kinase II/CK2 is a tetramer composed of two alpha subunit and two beta subunits.

Functionally, regulatory subunit of casein kinase II/CK2. As part of the kinase complex regulates the basal catalytic activity of the alpha subunit a constitutively active serine/threonine-protein kinase that phosphorylates a large number of substrates containing acidic residues C-terminal to the phosphorylated serine or threonine. In Dictyostelium discoideum (Social amoeba), this protein is Casein kinase II subunit beta (csnk2b).